Here is a 92-residue protein sequence, read N- to C-terminus: DNA-directed RNA polymerase subunit Rpo11 (92 aa).

This sequence belongs to the archaeal Rpo11/eukaryotic RPB11/RPC19 RNA polymerase subunit family. As to quaternary structure, part of the RNA polymerase complex.

The protein resides in the cytoplasm. The catalysed reaction is RNA(n) + a ribonucleoside 5'-triphosphate = RNA(n+1) + diphosphate. DNA-dependent RNA polymerase (RNAP) catalyzes the transcription of DNA into RNA using the four ribonucleoside triphosphates as substrates. This is DNA-directed RNA polymerase subunit Rpo11 from Pyrobaculum aerophilum (strain ATCC 51768 / DSM 7523 / JCM 9630 / CIP 104966 / NBRC 100827 / IM2).